The sequence spans 638 residues: Neuroendocrine convertase 2 (638 aa).

Residues 1-25 (MRGGCISQGKAAAGLLFCVMVFASA) form the signal peptide. A propeptide spanning residues 26-109 (ERPVFTNHFL…QQEGFNRKKR (84 aa)) is cleaved from the precursor. In terms of domain architecture, Peptidase S8 spans 129–453 (QWYLINTGQA…YGVLDAGAMV (325 aa)). Active-site charge relay system residues include Asp167 and His208. 2 cysteine pairs are disulfide-bonded: Cys225-Cys376 and Cys317-Cys347. N-linked (GlcNAc...) asparagine glycosylation is present at Asn375. Ser384 (charge relay system) is an active-site residue. The P/Homo B domain occupies 461 to 597 (TVPERFHCVG…TLMLHGTQSA (137 aa)). An intrachain disulfide couples Cys468 to Cys494. Residues Asn514 and Asn524 are each glycosylated (N-linked (GlcNAc...) asparagine).

The protein belongs to the peptidase S8 family. Furin subfamily.

The protein resides in the cytoplasmic vesicle. It is found in the secretory vesicle. It localises to the secreted. It carries out the reaction Release of protein hormones and neuropeptides from their precursors, generally by hydrolysis of -Lys-Arg-|- bonds.. In terms of biological role, serine endopeptidase which is involved in the processing of hormone and other protein precursors at sites comprised of pairs of basic amino acid residues. Responsible for the release of glucagon from proglucagon in pancreatic A cells. The polypeptide is Neuroendocrine convertase 2 (PCSK2) (Bos taurus (Bovine)).